The primary structure comprises 366 residues: tRNA/tmRNA (uracil-C(5))-methyltransferase (366 aa).

S-adenosyl-L-methionine-binding residues include Q190, Y218, N223, E239, and D299. C324 functions as the Nucleophile in the catalytic mechanism. E358 acts as the Proton acceptor in catalysis.

This sequence belongs to the class I-like SAM-binding methyltransferase superfamily. RNA M5U methyltransferase family. TrmA subfamily.

The catalysed reaction is uridine(54) in tRNA + S-adenosyl-L-methionine = 5-methyluridine(54) in tRNA + S-adenosyl-L-homocysteine + H(+). The enzyme catalyses uridine(341) in tmRNA + S-adenosyl-L-methionine = 5-methyluridine(341) in tmRNA + S-adenosyl-L-homocysteine + H(+). Its function is as follows. Dual-specificity methyltransferase that catalyzes the formation of 5-methyluridine at position 54 (m5U54) in all tRNAs, and that of position 341 (m5U341) in tmRNA (transfer-mRNA). The protein is tRNA/tmRNA (uracil-C(5))-methyltransferase of Shigella boydii serotype 18 (strain CDC 3083-94 / BS512).